Consider the following 360-residue polypeptide: MSEDQYKQIKLHLGMEDDNEDLPNHIPSSFPKQHLNKIYNGDTMNMLLDIPDNSVDLVVTSPPYNINKFKNDRRPLEEYLKWQTEIIEQCHRVLKPSGSIFWQVGTYVNDSGAHIPLDIRFFPIFESLGMFPRNRIVWVRPHGLHANKKFAGRHETILWFTKTPEYKFFLDPIRVPQKYANKKHYKGDKKGELSGDPLGKNPGDVWAFRNVRHNHEEDTIHPTQYPEDMIERIVLSTTEPNDIVLDPFIGMGTTASVAKNLNRYFYGAEIEKEYVDIAYQILSGEPDENNNFPNLKTLRQYCEKNGIIDPSQYTFTRQRKGSKPSLDSKAHPEEHHKKEIVERIEFEAENSVYKKVQNEQ.

The disordered stretch occupies residues 316 to 341; sequence TRQRKGSKPSLDSKAHPEEHHKKEIV. Residues 326–341 are compositionally biased toward basic and acidic residues; the sequence is LDSKAHPEEHHKKEIV.

It belongs to the N(4)/N(6)-methyltransferase family. N(4) subfamily.

It catalyses the reaction a 2'-deoxycytidine in DNA + S-adenosyl-L-methionine = an N(4)-methyl-2'-deoxycytidine in DNA + S-adenosyl-L-homocysteine + H(+). A beta subtype methylase, recognizes the double-stranded sequence 5'-AGATCT-3', methylates C-5 on both strands, and protects the DNA from cleavage by the BglII endonuclease. In Bacillus subtilis, this protein is Type II methyltransferase M.BglII.